The primary structure comprises 190 residues: Pyridoxal 5'-phosphate synthase subunit PdxT (190 aa).

46–48 serves as a coordination point for L-glutamine; that stretch reads GES. Residue C78 is the Nucleophile of the active site. Residues R105 and 134-135 each bind L-glutamine; that span reads IR. Residues H170 and E172 each act as charge relay system in the active site.

This sequence belongs to the glutaminase PdxT/SNO family. In the presence of PdxS, forms a dodecamer of heterodimers. Only shows activity in the heterodimer.

The enzyme catalyses aldehydo-D-ribose 5-phosphate + D-glyceraldehyde 3-phosphate + L-glutamine = pyridoxal 5'-phosphate + L-glutamate + phosphate + 3 H2O + H(+). It carries out the reaction L-glutamine + H2O = L-glutamate + NH4(+). It participates in cofactor biosynthesis; pyridoxal 5'-phosphate biosynthesis. In terms of biological role, catalyzes the hydrolysis of glutamine to glutamate and ammonia as part of the biosynthesis of pyridoxal 5'-phosphate. The resulting ammonia molecule is channeled to the active site of PdxS. The protein is Pyridoxal 5'-phosphate synthase subunit PdxT of Clostridium beijerinckii (strain ATCC 51743 / NCIMB 8052) (Clostridium acetobutylicum).